The sequence spans 713 residues: MARARGSPCPPLPPGRMSWPHGALLFLWLFSPPLGAGGGGVAVTSAAGGGSPPATSCPVACSCSNQASRVICTRRDLAEVPASIPVNTRYLNLQENGIQVIRTDTFKHLRHLEILQLSKNLVRKIEVGAFNGLPSLNTLELFDNRLTTVPTQAFEYLSKLRELWLRNNPIESIPSYAFNRVPSLRRLDLGELKRLEYISEAAFEGLVNLRYLNLGMCNLKDIPNLTALVRLEELELSGNRLDLIRPGSFQGLTSLRKLWLMHAQVATIERNAFDDLKSLEELNLSHNNLMSLPHDLFTPLHRLERVHLNHNPWHCNCDVLWLSWWLKETVPSNTTCCARCHAPAGLKGRYIGELDQSHFTCYAPVIVEPPTDLNVTEGMAAELKCRTGTSMTSVNWLTPNGTLMTHGSYRVRISVLHDGTLNFTNVTVQDTGQYTCMVTNSAGNTTASATLNVSAVDPVAAGGTGSGGGGPGGSGGVGGGSGGYTYFTTVTVETLETQPGEEALQPRGTEKEPPGPTTDGVWGGGRPGDAAGPASSSTTAPAPRSSRPTEKAFTVPITDVTENALKDLDDVMKTTKIIIGCFVAITFMAAVMLVAFYKLRKQHQLHKHHGPTRTVEIINVEDELPAASAVSVAAAAAVASGGGVGGDSHLALPALERDHLNHHHYVAAAFKAHYSSNPSGGGCGGKGPPGLNSIHEPLLFKSGSKENVQETQI.

Positions 1-35 are cleaved as a signal peptide; sequence MARARGSPCPPLPPGRMSWPHGALLFLWLFSPPLG. The Extracellular portion of the chain corresponds to 36-576; sequence AGGGGVAVTS…DLDDVMKTTK (541 aa). In terms of domain architecture, LRRNT spans 48–86; that stretch reads GGGSPPATSCPVACSCSNQASRVICTRRDLAEVPASIPV. LRR repeat units lie at residues 87-108, 111-132, 135-156, 159-180, 183-205, 208-229, 230-251, 254-275, and 278-299; these read NTRY…TFKH, HLEI…AFNG, SLNT…AFEY, KLRE…AFNR, SLRR…AFEG, NLRY…TALV, RLEE…SFQG, SLRK…AFDD, and SLEE…LFTP. The N-linked (GlcNAc...) asparagine glycan is linked to asparagine 224. Asparagine 283, asparagine 333, asparagine 374, asparagine 400, asparagine 422, asparagine 425, asparagine 444, and asparagine 452 each carry an N-linked (GlcNAc...) asparagine glycan. Positions 311–363 constitute an LRRCT domain; sequence NPWHCNCDVLWLSWWLKETVPSNTTCCARCHAPAGLKGRYIGELDQSHFTCYA. The Ig-like C2-type domain occupies 364–452; that stretch reads PVIVEPPTDL…GNTTASATLN (89 aa). Cysteine 385 and cysteine 436 are joined by a disulfide. The disordered stretch occupies residues 497–551; the sequence is TQPGEEALQPRGTEKEPPGPTTDGVWGGGRPGDAAGPASSSTTAPAPRSSRPTEK. Low complexity predominate over residues 528 to 546; sequence GDAAGPASSSTTAPAPRSS. A helical transmembrane segment spans residues 577–597; the sequence is IIIGCFVAITFMAAVMLVAFY. Residues 598 to 713 lie on the Cytoplasmic side of the membrane; that stretch reads KLRKQHQLHK…SKENVQETQI (116 aa). Serine 693 carries the phosphoserine modification. The tract at residues 694–713 is disordered; the sequence is IHEPLLFKSGSKENVQETQI. The span at 703 to 713 shows a compositional bias: basic and acidic residues; that stretch reads GSKENVQETQI.

Interacts with PTPRF. Interacts with DLG4. In terms of processing, N-glycosylated. O-glycosylated; contains sialic acid.

The protein localises to the membrane. It is found in the presynaptic cell membrane. Synaptic adhesion protein. Regulates the formation of excitatory synapses. The trans-synaptic adhesion between LRRC4B and PTPRF regulates the formation of excitatory synapses in a bidirectional manner. The chain is Leucine-rich repeat-containing protein 4B (LRRC4B) from Homo sapiens (Human).